Reading from the N-terminus, the 227-residue chain is Cytidylate kinase (227 aa).

Position 12–20 (Gly-12–Thr-20) interacts with ATP.

It belongs to the cytidylate kinase family. Type 1 subfamily.

It is found in the cytoplasm. It carries out the reaction CMP + ATP = CDP + ADP. It catalyses the reaction dCMP + ATP = dCDP + ADP. The sequence is that of Cytidylate kinase from Salmonella typhimurium (strain LT2 / SGSC1412 / ATCC 700720).